The chain runs to 63 residues: Large ribosomal subunit protein bL32 (63 aa).

The disordered stretch occupies residues 1–27 (MANPKAKMSKSRRDKRRAQFNARTKPV). Over residues 7–18 (KMSKSRRDKRRA) the composition is skewed to basic residues.

The protein belongs to the bacterial ribosomal protein bL32 family.

The sequence is that of Large ribosomal subunit protein bL32 from Chlorobium phaeobacteroides (strain DSM 266 / SMG 266 / 2430).